Reading from the N-terminus, the 382-residue chain is Putative glutamate--cysteine ligase 2-1 (382 aa).

It belongs to the glutamate--cysteine ligase type 2 family. YbdK subfamily.

It catalyses the reaction L-cysteine + L-glutamate + ATP = gamma-L-glutamyl-L-cysteine + ADP + phosphate + H(+). ATP-dependent carboxylate-amine ligase which exhibits weak glutamate--cysteine ligase activity. The protein is Putative glutamate--cysteine ligase 2-1 of Frankia alni (strain DSM 45986 / CECT 9034 / ACN14a).